Reading from the N-terminus, the 311-residue chain is Putative HTH-type transcriptional regulatory protein PTO0557 (311 aa).

An HTH cro/C1-type domain is found at 132-186; it reads MRRIRELKGYSVGYLSSKLGISRRSISLYESGSSATIDIYLKLEETLGEDLTKDI. The H-T-H motif DNA-binding region spans 143–162; sequence VGYLSSKLGISRRSISLYES.

The chain is Putative HTH-type transcriptional regulatory protein PTO0557 from Picrophilus torridus (strain ATCC 700027 / DSM 9790 / JCM 10055 / NBRC 100828 / KAW 2/3).